The sequence spans 798 residues: Nuclear cap-binding protein subunit 1 (798 aa).

In terms of domain architecture, MIF4G spans 28 to 241 (EKKLQGVIGK…SLSAQIEALR (214 aa)). Residues 663 to 686 (NKIKEEDDEESDIKMDEDETKEEK) are disordered. The segment covering 668–682 (EDDEESDIKMDEDET) has biased composition (acidic residues).

Belongs to the NCBP1 family. In terms of assembly, component of the nuclear cap-binding complex (CBC), a heterodimer composed of ncbp-1 and ncbp-1 that interacts with m7GpppG-capped RNA.

The protein localises to the nucleus. Component of the cap-binding complex (CBC), which binds cotranscriptionally to the 5'-cap of pre-mRNAs and is involved in various processes such as pre-mRNA splicing and RNA-mediated gene silencing (RNAi). The CBC complex is involved in miRNA-mediated RNA interference and is required for primary microRNAs (miRNAs) processing. In the CBC complex, ncbp-1 does not bind directly capped RNAs (m7GpppG-capped RNA) but is required to stabilize the movement of the N-terminal loop of ncbp-2 and lock the CBC into a high affinity cap-binding state with the cap structure. This chain is Nuclear cap-binding protein subunit 1 (ncbp-1), found in Caenorhabditis elegans.